Reading from the N-terminus, the 523-residue chain is 2-isopropylmalate synthase (523 aa).

In terms of domain architecture, Pyruvate carboxyltransferase spans 5-267; that stretch reads VIIFDTTLRD…ETGINAKEIH (263 aa). Residues Asp-14, His-202, His-204, and Asn-238 each contribute to the Mn(2+) site. The tract at residues 392-523 is regulatory domain; sequence KLQQLVVHSD…QQNKRELGGV (132 aa).

Belongs to the alpha-IPM synthase/homocitrate synthase family. LeuA type 1 subfamily. In terms of assembly, homodimer. Requires Mn(2+) as cofactor.

The protein resides in the cytoplasm. It catalyses the reaction 3-methyl-2-oxobutanoate + acetyl-CoA + H2O = (2S)-2-isopropylmalate + CoA + H(+). It participates in amino-acid biosynthesis; L-leucine biosynthesis; L-leucine from 3-methyl-2-oxobutanoate: step 1/4. Its function is as follows. Catalyzes the condensation of the acetyl group of acetyl-CoA with 3-methyl-2-oxobutanoate (2-ketoisovalerate) to form 3-carboxy-3-hydroxy-4-methylpentanoate (2-isopropylmalate). The polypeptide is 2-isopropylmalate synthase (Shewanella pealeana (strain ATCC 700345 / ANG-SQ1)).